Consider the following 102-residue polypeptide: MGTASDAAALVTRLVRVRGRVQGIGYREACVRRARALGVTGWVRNRMDASVEAMLQGLPLQLEAMCAWLDEGMPAALVEGMEVIEVPAPFPRFDRFEQLPTL.

The region spanning 12–100 is the Acylphosphatase-like domain; the sequence is TRLVRVRGRV…PRFDRFEQLP (89 aa). Residues Arg27 and Asn45 contribute to the active site.

The protein belongs to the acylphosphatase family.

The catalysed reaction is an acyl phosphate + H2O = a carboxylate + phosphate + H(+). The polypeptide is Acylphosphatase 1 (acyP1) (Ralstonia nicotianae (strain ATCC BAA-1114 / GMI1000) (Ralstonia solanacearum)).